A 558-amino-acid polypeptide reads, in one-letter code: uncharacterized protein (558 aa).

Low complexity predominate over residues 338 to 354 (STSTSTSTSTSSSNDLN). The disordered stretch occupies residues 338 to 380 (STSTSTSTSTSSSNDLNLDSDSDDSDSDDSDSDSDSDSDSEID). Positions 355–380 (LDSDSDDSDSDDSDSDSDSDSDSEID) are enriched in acidic residues.

It is found in the plastid. This is an uncharacterized protein from Euglena longa (Euglenophycean alga).